Reading from the N-terminus, the 64-residue chain is Purotoxin-2 (64 aa).

The interval 1-44 (AKACTPLLHDCSHDRHSCCRGDMFKYVCDCFYPEGEDKTEVCSC) is knottin domain. 4 cysteine pairs are disulfide-bonded: C4-C19, C11-C28, C18-C44, and C30-C42. The linear cationic cytotoxin domain stretch occupies residues 45 to 64 (QQPKSHKIAEKIIDKAKTTL). L64 carries the leucine amide modification.

Belongs to the neurotoxin 19 (CSTX) family. 05 (U4-Lctx) subfamily. Post-translationally, amidation at Leu-64 is not mandatory for activity on P2RX3. Expressed by the venom gland.

Its subcellular location is the secreted. Enhances the high-affinity desensitization of human P2RX3 purinoceptors. At 50 nM, the toxin decreases the IC(50) for ambient ATP from 2.67 nM to 0.77 nM in human P2RX3. The protein is Purotoxin-2 of Alopecosa marikovskyi (Wolf spider).